The following is a 410-amino-acid chain: F-box protein At3g19890 (410 aa).

The F-box domain maps to 2–49; sequence TMISDLSKDLVEEILSKAPITSLGAVRSTHKQWNALSKGRLLYKAEAK. Residues 386–410 form a disordered region; that stretch reads EDKCKSIKMVDTKRQRKKRKRKSKR. Residues 387 to 398 are compositionally biased toward basic and acidic residues; sequence DKCKSIKMVDTK. Residues 399–410 are compositionally biased toward basic residues; it reads RQRKKRKRKSKR.

This is F-box protein At3g19890 from Arabidopsis thaliana (Mouse-ear cress).